The chain runs to 368 residues: Peptide chain release factor 2 (368 aa).

N5-methylglutamine is present on Gln-251.

Belongs to the prokaryotic/mitochondrial release factor family. Methylated by PrmC. Methylation increases the termination efficiency of RF2.

The protein resides in the cytoplasm. In terms of biological role, peptide chain release factor 2 directs the termination of translation in response to the peptide chain termination codons UGA and UAA. This chain is Peptide chain release factor 2, found in Streptomyces avermitilis (strain ATCC 31267 / DSM 46492 / JCM 5070 / NBRC 14893 / NCIMB 12804 / NRRL 8165 / MA-4680).